A 440-amino-acid polypeptide reads, in one-letter code: Dihydrolipoyllysine-residue acetyltransferase component of pyruvate dehydrogenase complex (440 aa).

The Lipoyl-binding domain occupies 2 to 78 (SIEVKMPALS…AVGQVIAVMA (77 aa)). Lys-43 carries the N6-lipoyllysine modification. The interval 91–113 (ASSQISEPSEKADVAQKETADSE) is disordered. Basic and acidic residues predominate over residues 98 to 110 (PSEKADVAQKETA). One can recognise a Peripheral subunit-binding (PSBD) domain in the interval 149 to 186 (KASPLAKRLAKKNHVDLKQVNGSGPHGRIIKADIEAFI). Polar residues predominate over residues 192–202 (ASSNPSVSTPE). Residues 192–214 (ASSNPSVSTPEASGKITHDTPHN) form a disordered region. His-412 is an active-site residue.

This sequence belongs to the 2-oxoacid dehydrogenase family. In terms of assembly, forms a 24-polypeptide structural core with octahedral symmetry. (R)-lipoate serves as cofactor.

The catalysed reaction is N(6)-[(R)-dihydrolipoyl]-L-lysyl-[protein] + acetyl-CoA = N(6)-[(R)-S(8)-acetyldihydrolipoyl]-L-lysyl-[protein] + CoA. The pyruvate dehydrogenase complex catalyzes the overall conversion of pyruvate to acetyl-CoA and CO(2). It contains multiple copies of three enzymatic components: pyruvate dehydrogenase (E1), dihydrolipoamide acetyltransferase (E2) and lipoamide dehydrogenase (E3). This Zymomonas mobilis subsp. mobilis (strain ATCC 31821 / ZM4 / CP4) protein is Dihydrolipoyllysine-residue acetyltransferase component of pyruvate dehydrogenase complex (pdhC).